Reading from the N-terminus, the 317-residue chain is Putative GTPase PH0274 (317 aa).

GTP contacts are provided by residues 54-62 (GPPGAGKST), D196, and 231-233 (VGT).

This sequence belongs to the SIMIBI class G3E GTPase family. ArgK/MeaB subfamily.

Functionally, may have GTPase activity. May also bind and hydrolyze ATP. May function as chaperone. In Pyrococcus horikoshii (strain ATCC 700860 / DSM 12428 / JCM 9974 / NBRC 100139 / OT-3), this protein is Putative GTPase PH0274.